A 306-amino-acid polypeptide reads, in one-letter code: Bifunctional protein FolD 1 (306 aa).

NADP(+) contacts are provided by residues 168–170, Ser-193, and Ile-234; that span reads GRS.

Belongs to the tetrahydrofolate dehydrogenase/cyclohydrolase family. As to quaternary structure, homodimer.

The enzyme catalyses (6R)-5,10-methylene-5,6,7,8-tetrahydrofolate + NADP(+) = (6R)-5,10-methenyltetrahydrofolate + NADPH. The catalysed reaction is (6R)-5,10-methenyltetrahydrofolate + H2O = (6R)-10-formyltetrahydrofolate + H(+). It participates in one-carbon metabolism; tetrahydrofolate interconversion. In terms of biological role, catalyzes the oxidation of 5,10-methylenetetrahydrofolate to 5,10-methenyltetrahydrofolate and then the hydrolysis of 5,10-methenyltetrahydrofolate to 10-formyltetrahydrofolate. This Rhizobium meliloti (strain 1021) (Ensifer meliloti) protein is Bifunctional protein FolD 1.